The chain runs to 576 residues: Protein O-linked-mannose beta-1,4-N-acetylglucosaminyltransferase 2 (576 aa).

Residues 1 to 4 (MNIS) are Cytoplasmic-facing. A helical; Signal-anchor for type II membrane protein transmembrane segment spans residues 5–25 (AVFNALLVSIMAAVLWKHVKL). The Lumenal segment spans residues 26–576 (LEQFYVIEEE…PFAEVLVCNT (551 aa)). N-linked (GlcNAc...) asparagine glycosylation is found at asparagine 98, asparagine 275, asparagine 335, asparagine 451, asparagine 539, and asparagine 561. One can recognise a Fibronectin type-III domain in the interval 482–576 (RESKCQASAQ…PFAEVLVCNT (95 aa)).

The protein belongs to the glycosyltransferase 61 family.

Its subcellular location is the endoplasmic reticulum membrane. It catalyses the reaction 3-O-(alpha-D-mannosyl)-L-threonyl-[protein] + UDP-N-acetyl-alpha-D-glucosamine = 3-O-(N-acetyl-beta-D-glucosaminyl-(1-&gt;4)-alpha-D-mannosyl)-L-threonyl-[protein] + UDP + H(+). It functions in the pathway protein modification; protein glycosylation. In terms of biological role, O-linked mannose beta-1,4-N-acetylglucosaminyltransferase that transfers UDP-N-acetyl-D-glucosamine to the 4-position of the mannose to generate N-acetyl-D-glucosamine-beta-1,4-O-D-mannosylprotein. Involved in the biosynthesis of the phosphorylated O-mannosyl trisaccharide (N-acetylgalactosamine-beta-3-N-acetylglucosamine-beta-4-(phosphate-6-)mannose), a carbohydrate structure present in alpha-dystroglycan (DAG1), which is required for binding laminin G-like domain-containing extracellular proteins with high affinity. The polypeptide is Protein O-linked-mannose beta-1,4-N-acetylglucosaminyltransferase 2 (pomgnt2) (Xenopus tropicalis (Western clawed frog)).